Consider the following 112-residue polypeptide: UPF0235 protein RHE_CH03912 (112 aa).

This sequence belongs to the UPF0235 family.

This Rhizobium etli (strain ATCC 51251 / DSM 11541 / JCM 21823 / NBRC 15573 / CFN 42) protein is UPF0235 protein RHE_CH03912.